An 823-amino-acid polypeptide reads, in one-letter code: Protein FAM193B (823 aa).

Disordered stretches follow at residues 1–78, 158–191, 209–281, and 381–409; these read MTRR…TSQS, SCKSQSCGGDSHSSSSSSSSSSSSSSSCHGNSGD, SPHS…PTTP, and CEADEGLGEEEDSSSERSSCTSSSTHQRD. Pro residues predominate over residues 26-36; that stretch reads PQAPEPPPPPS. A compositionally biased stretch (basic and acidic residues) spans 52-64; sequence PYRDDPREEDEPK. 2 stretches are compositionally biased toward low complexity: residues 168–184 and 263–281; these read SHSSSSSSSSSSSSSSS and SHPGSFGSPPHPHLLPTTP. Residues 382–393 show a composition bias toward acidic residues; it reads EADEGLGEEEDS. The stretch at 422 to 484 forms a coiled coil; it reads GHNAEKEKAQ…RLQEIKNTVK (63 aa). 2 disordered regions span residues 503 to 583 and 599 to 775; these read FSKE…PENG and WVKT…PKDM. Composition is skewed to polar residues over residues 516–526 and 641–657; these read LAPSNPSGSSE and QGNQAKKSEVSPASQSP. A phosphoserine mark is found at serine 694, serine 706, and serine 813.

Belongs to the FAM193 family.

The protein resides in the cytoplasm. The protein localises to the nucleus. In Bos taurus (Bovine), this protein is Protein FAM193B (FAM193B).